Reading from the N-terminus, the 97-residue chain is Putative septation protein SpoVG (97 aa).

This sequence belongs to the SpoVG family.

Its function is as follows. Essential for sporulation. Interferes with or is a negative regulator of the pathway leading to asymmetric septation. The sequence is that of Putative septation protein SpoVG from Bacillus cytotoxicus (strain DSM 22905 / CIP 110041 / 391-98 / NVH 391-98).